Consider the following 326-residue polypeptide: Probable UDP-3-O-acyl-N-acetylglucosamine deacetylase 2, mitochondrial (326 aa).

A mitochondrion-targeting transit peptide spans 1-21 (MRLPVTVKATKPSFLVIWIRY). H109, H281, and D285 together coordinate Zn(2+).

This sequence belongs to the LpxC family. Zn(2+) is required as a cofactor.

The protein resides in the mitochondrion. The enzyme catalyses a UDP-3-O-[(3R)-3-hydroxyacyl]-N-acetyl-alpha-D-glucosamine + H2O = a UDP-3-O-[(3R)-3-hydroxyacyl]-alpha-D-glucosamine + acetate. It participates in glycolipid biosynthesis; lipid IV(A) biosynthesis; lipid IV(A) from (3R)-3-hydroxytetradecanoyl-[acyl-carrier-protein] and UDP-N-acetyl-alpha-D-glucosamine: step 2/6. Involved in the biosynthesis of lipid A, a phosphorylated glycolipid that in bacteria anchors the lipopolysaccharide to the outer membrane of the cell. Lipid A-like molecules in plants may serve as structural components of the outer membranes of mitochondria and/or chloroplasts, or may be involved in signal transduction or plant defense responses (Potential). This chain is Probable UDP-3-O-acyl-N-acetylglucosamine deacetylase 2, mitochondrial (LPXC2), found in Arabidopsis thaliana (Mouse-ear cress).